Here is a 601-residue protein sequence, read N- to C-terminus: Coronin-like protein crn1 (601 aa).

5 WD repeats span residues 79–119, 132–172, 174–213, 220–260, and 266–306; these read GHTA…TVME, GHSR…AHVS, KMDV…PVSV, AKNP…EPIG, and DTGS…FHYL. Disordered stretches follow at residues 361–386 and 407–540; these read SDIY…KDAQ and SATV…VEEK. Composition is skewed to basic and acidic residues over residues 419-429, 437-453, and 462-495; these read KHNEEKVETPK, KPKE…EPEV, and KVEE…EKSF. A phosphoserine mark is found at S500 and S501. Over residues 507 to 526 the composition is skewed to basic and acidic residues; it reads EDVKKEPSEEKKLEVSDEAP. The residue at position 553 (S553) is a Phosphoserine. A coiled-coil region spans residues 556 to 600; that stretch reads NLADLNKRFEGFEKRYEEELAIRDWKIAQLEDKLAKLTEAIKEKC.

The protein belongs to the WD repeat coronin family. As to quaternary structure, binds to F-actin.

This chain is Coronin-like protein crn1 (crn1), found in Schizosaccharomyces pombe (strain 972 / ATCC 24843) (Fission yeast).